The primary structure comprises 399 residues: G2/mitotic-specific cyclin-B2 (399 aa).

The interval P58–P78 is disordered.

The protein belongs to the cyclin family. Cyclin AB subfamily. As to quaternary structure, interacts with the CDK1 protein kinase to form a serine/threonine kinase holoenzyme complex also known as maturation promoting factor (MPF). The cyclin subunit imparts substrate specificity to the complex.

Its function is as follows. Essential for the control of the cell cycle at the G2/M (mitosis) transition. The polypeptide is G2/mitotic-specific cyclin-B2 (CCNB2) (Gallus gallus (Chicken)).